We begin with the raw amino-acid sequence, 423 residues long: Levansucrase (423 aa).

Positions 47, 48, 119, 193, and 194 each coordinate sucrose. Asp-48 acts as the Nucleophile in catalysis. The active-site Proton donor/acceptor is the Glu-278.

Belongs to the glycosyl hydrolase 68 family.

The protein resides in the secreted. The catalysed reaction is [6)-beta-D-fructofuranosyl-(2-&gt;](n) alpha-D-glucopyranoside + sucrose = [6)-beta-D-fructofuranosyl-(2-&gt;](n+1) alpha-D-glucopyranoside + D-glucose. Its function is as follows. Catalyzes the synthesis of levan, a fructose polymer, by transferring the fructosyl moiety from sucrose to a growing acceptor molecule. In Zymomonas mobilis subsp. mobilis (strain ATCC 10988 / DSM 424 / LMG 404 / NCIMB 8938 / NRRL B-806 / ZM1), this protein is Levansucrase.